The primary structure comprises 261 residues: tRNA pseudouridine synthase A (261 aa).

D52 (nucleophile) is an active-site residue. Y110 provides a ligand contact to substrate.

This sequence belongs to the tRNA pseudouridine synthase TruA family. In terms of assembly, homodimer.

It catalyses the reaction uridine(38/39/40) in tRNA = pseudouridine(38/39/40) in tRNA. Formation of pseudouridine at positions 38, 39 and 40 in the anticodon stem and loop of transfer RNAs. This Blochmanniella pennsylvanica (strain BPEN) protein is tRNA pseudouridine synthase A.